Here is a 271-residue protein sequence, read N- to C-terminus: Sorting nexin-11 (271 aa).

The 117-residue stretch at 16-132 (VITVRVQDPR…HLFLQSQLSV (117 aa)) folds into the PX domain. A 1,2-diacyl-sn-glycero-3-phospho-(1D-myo-inositol-3-phosphate)-binding residues include Arg59, Lys85, and Arg99. The important for membrane trafficking stretch occupies residues 135–139 (IEACV). Residues 185 to 271 (PRSGRRSSPS…PTQLDTAWDK (87 aa)) are disordered. Residues 213-230 (SEGPSSESPTLLPSSSLP) show a composition bias toward low complexity.

Belongs to the sorting nexin family. In terms of assembly, monomer. Interacts with TRPV3; this interaction promotes TRPV3 trafficking from the cell membrane to lysosome for degradation.

It is found in the cell membrane. The protein resides in the endosome. The protein localises to the cytoplasm. Functionally, phosphoinositide-binding protein involved in protein sorting and membrane trafficking in endosomes. Regulates the levels of TRPV3 by promoting its trafficking from the cell membrane to lysosome for degradation. The chain is Sorting nexin-11 (Snx11) from Mus musculus (Mouse).